Consider the following 82-residue polypeptide: Turripeptide IX-04 (82 aa).

The N-terminal stretch at 1–21 (MGFYMLLTVALLLTSLMNVEA) is a signal peptide. Positions 22–39 (TPVDQAERSALEKSGLGN) are excised as a propeptide. 3 disulfide bridges follow: cysteine 48-cysteine 70, cysteine 55-cysteine 74, and cysteine 60-cysteine 81.

In terms of tissue distribution, expressed by the venom duct.

It localises to the secreted. The sequence is that of Turripeptide IX-04 from Gemmula speciosa (Splendid gem-turris).